Consider the following 673-residue polypeptide: UvrABC system protein B (673 aa).

The Helicase ATP-binding domain maps to 26–414 (EGLEDGLAHQ…GDEVVDQVVR (389 aa)). Position 39–46 (39–46 (GVTGSGKT)) interacts with ATP. A Beta-hairpin motif is present at residues 92–115 (YYDYYQPEAYVPSSDTFIEKDASI). The Helicase C-terminal domain occupies 431 to 597 (QVDDLLSEIR…GLNKKVVDIL (167 aa)). The UVR domain occupies 633-668 (QQKIHELEGQMMQHAQNLEFEEAAQIRDQLHQLREL).

The protein belongs to the UvrB family. As to quaternary structure, forms a heterotetramer with UvrA during the search for lesions. Interacts with UvrC in an incision complex.

The protein resides in the cytoplasm. In terms of biological role, the UvrABC repair system catalyzes the recognition and processing of DNA lesions. A damage recognition complex composed of 2 UvrA and 2 UvrB subunits scans DNA for abnormalities. Upon binding of the UvrA(2)B(2) complex to a putative damaged site, the DNA wraps around one UvrB monomer. DNA wrap is dependent on ATP binding by UvrB and probably causes local melting of the DNA helix, facilitating insertion of UvrB beta-hairpin between the DNA strands. Then UvrB probes one DNA strand for the presence of a lesion. If a lesion is found the UvrA subunits dissociate and the UvrB-DNA preincision complex is formed. This complex is subsequently bound by UvrC and the second UvrB is released. If no lesion is found, the DNA wraps around the other UvrB subunit that will check the other stand for damage. This Salmonella paratyphi A (strain ATCC 9150 / SARB42) protein is UvrABC system protein B.